We begin with the raw amino-acid sequence, 67 residues long: Phycobilisome 7.8 kDa linker polypeptide, allophycocyanin-associated, core (67 aa).

One can recognise a CpcD-like domain in the interval 1-56 (MRMFKITACVPSQTRIRTQRELQNTYFTKLVPYENWFREQQRIQKMGGKIVKVELF).

It belongs to the phycobilisome linker protein family.

It localises to the cellular thylakoid membrane. Its function is as follows. Rod linker protein, associated with allophycocyanin. Linker polypeptides determine the state of aggregation and the location of the disk-shaped phycobiliprotein units within the phycobilisome and modulate their spectroscopic properties in order to mediate a directed and optimal energy transfer. The protein is Phycobilisome 7.8 kDa linker polypeptide, allophycocyanin-associated, core (apcC) of Thermosynechococcus vestitus (strain NIES-2133 / IAM M-273 / BP-1).